The primary structure comprises 715 residues: Coiled-coil domain-containing protein 170 (715 aa).

3 coiled-coil regions span residues 30-286, 360-418, and 478-656; these read VTRE…AGQQ, ESRD…LVSG, and ENKT…FREV. The interval 355-591 is required for binding to microtubules and Golgi apparatus location; that stretch reads MDSREESRDR…DLNKSRDQLE (237 aa).

Binds Golgi-associated microtubules.

It is found in the golgi apparatus. Functionally, plays a role in Golgi-associated microtubules organization and stabilization. In Homo sapiens (Human), this protein is Coiled-coil domain-containing protein 170.